The primary structure comprises 1611 residues: MSQVSGGKVPSYHAPPFDSPLSGATIHELRCLDTKVQLGFHLVPHIAKTLITELPSSAYVLVTDTNLAKLGAIDKFRKAFEAIPGARLLVYELAPGEESKSRETKAAIEDWMLEHRLTRDTVVLACGGGVIGDLVGFVAATFMRGLKYVQIPTTLLAMVDSSVGGKTAIDHPHGKNLIGAFHQPRYVFIDAAWLLTLPEREFSNGMAEVIKTAAIWDAADFEKLESESASIRAAVMGDEARQQSAAQGHTLATRTSSQSLLLDVIRGSVGVKAHIVTIDEKETGLRNLVNFGHSVGHAIEAVLTPDILHGECVAVGMVLEAEIARLVHGLPQVAIGRLVRCLRLYNLPVTLADARIMALSKVRELTTARVLDIMRVDKKNAGAQKKIVLLSRIGATVEERASTVSDAMIERVLAPAMLVRESVSAPRPPLTIHTPGSKSVSNRALVLAALSGGTCRLRHLLHSDDTQVMMQALAQLRAADFAWEDNGATLVVHGQGGRVLASDEPVYLQNAGTAARFVTAVACLASSASCSGSDESSCHGVVHLTGNARMKQRPIGPLVDALRSNGARIDYVEQSNCLPLNVTASGALQGGRIELAADVSSQYVSAVLLCAPYAQNDVELALVGGKVISQPYIDMTIAMMQSFGVRVERVAEHVYRIPRTTYVAPSTYEVECDASSATYPLAIAAITGTTVTVPSLGRASLQGDAAFARKVLAPMGCQVEQNDVSTTVTGPPVGMLKALGAIDMESMTDAFITAAMLFAVATAPCDEYASSSTSASPSSTRITGIANQRVKECDRLRAVVTELAKLGVRAVEHDDGIEVFSTPISQLLPHASIYCYDDHRIAMAFSVLACVVPGAGTEIQEKRCVEKTWPSWWDVLGGPLNVPIAGARLNDALVSLVARSRQRGPPTPTTLYGRDASIVLIGMRASGKSHVGRSLAKLLHRTFVDADVVFSDMYDIGAFVQDHGWDAFRAEESRILESLLTQCSVGHVIALGGGVIESAASRALLARFREHVGPVVHIVRDFALIESFLATSDRPAYGEPLADVYARRLPLYAESSCMEAVNTGNDAALALSRQLRTPLGTPVPISPAFFLSLTFPRVQDAWSILDHASAGVDVLELRVDLLHADGQPSIDDVREQVALLRQYTSLPILYTVRSVSQGGRLPDEANEAYFALTRLGLRMGCEYVDIELTRPSDGIEELAQAKGQTRIVASFHDTSGTMHWMAPAMRRLYTRACVLGDIAKLVGFARTWQDSLDLESFRTRVAQEAPFPLIAINMQAAGQLSRIVNPLLTPVTHPALPVPAAPGQMSVRDIHHARHLLGLLPKRHFFLFGSPITHSQSPLIHNTAFELLGLPHVYARHETDSVDASVEALVRAGDFGGASVTIPHKLSIMQLLDSVSPHAQVIGAVNTIVPHRDETTGHMALHGENTDWRAIVDLVAKHDGGRTRACTALVIGAGGSARAALYAMHKLGASRILLYNRTFEKAVNLAEQVPVEWRVEPVDSLALAAKAKPNVIVSNVPAQGTSFTPGGADIVLPLDLLSSDGGVAIDMAYRPEITPLLTLAQQHQSWHGVRGIEILLAQAFHQFRLWTGLPPPCLDIETTVYAAYRAAAASM.

Residues 1-406 (MSQVSGGKVP…VEERASTVSD (406 aa)) are 3-dehydroquinate synthase. NAD(+)-binding positions include 64 to 66 (DTN), 97 to 100 (EESK), 128 to 130 (GGV), and Asp133. Arg144 contributes to the 7-phospho-2-dehydro-3-deoxy-D-arabino-heptonate binding site. 153–154 (TT) serves as a coordination point for NAD(+). The 7-phospho-2-dehydro-3-deoxy-D-arabino-heptonate site is built by Asp160 and Lys166. Lys175 is a binding site for NAD(+). Asn176 contacts 7-phospho-2-dehydro-3-deoxy-D-arabino-heptonate. Residues 193-196 (WLLT) and Asn204 contribute to the NAD(+) site. Residue Glu208 coordinates Zn(2+). 7-phospho-2-dehydro-3-deoxy-D-arabino-heptonate-binding positions include 208–211 (EVIK) and Lys272. Residue Glu282 is the Proton acceptor; for 3-dehydroquinate synthase activity of the active site. Residues 286 to 290 (RNLVN) and His293 each bind 7-phospho-2-dehydro-3-deoxy-D-arabino-heptonate. A Zn(2+)-binding site is contributed by His293. His297 acts as the Proton acceptor; for 3-dehydroquinate synthase activity in catalysis. Residues His309 and Lys378 each coordinate 7-phospho-2-dehydro-3-deoxy-D-arabino-heptonate. His309 contributes to the Zn(2+) binding site. An EPSP synthase region spans residues 419 to 882 (VRESVSAPRP…WDVLGGPLNV (464 aa)). The active-site For EPSP synthase activity is Cys864. Positions 915-1092 (DASIVLIGMR…VPISPAFFLS (178 aa)) are shikimate kinase. Residue 922-929 (GMRASGKS) participates in ATP binding. Positions 1093-1309 (LTFPRVQDAW…AAPGQMSVRD (217 aa)) are 3-dehydroquinase. Residue His1212 is the Proton acceptor; for 3-dehydroquinate dehydratase activity of the active site. Residue Lys1240 is the Schiff-base intermediate with substrate; for 3-dehydroquinate dehydratase activity of the active site. The tract at residues 1322-1611 (KRHFFLFGSP…AAYRAAAASM (290 aa)) is shikimate dehydrogenase.

The protein in the N-terminal section; belongs to the sugar phosphate cyclases superfamily. Dehydroquinate synthase family. In the 2nd section; belongs to the EPSP synthase family. It in the 3rd section; belongs to the shikimate kinase family. This sequence in the 4th section; belongs to the type-I 3-dehydroquinase family. The protein in the C-terminal section; belongs to the shikimate dehydrogenase family. In terms of assembly, homodimer. The cofactor is Zn(2+).

The protein resides in the cytoplasm. It catalyses the reaction 7-phospho-2-dehydro-3-deoxy-D-arabino-heptonate = 3-dehydroquinate + phosphate. It carries out the reaction 3-dehydroquinate = 3-dehydroshikimate + H2O. The catalysed reaction is shikimate + NADP(+) = 3-dehydroshikimate + NADPH + H(+). The enzyme catalyses shikimate + ATP = 3-phosphoshikimate + ADP + H(+). It catalyses the reaction 3-phosphoshikimate + phosphoenolpyruvate = 5-O-(1-carboxyvinyl)-3-phosphoshikimate + phosphate. It participates in metabolic intermediate biosynthesis; chorismate biosynthesis; chorismate from D-erythrose 4-phosphate and phosphoenolpyruvate: step 2/7. The protein operates within metabolic intermediate biosynthesis; chorismate biosynthesis; chorismate from D-erythrose 4-phosphate and phosphoenolpyruvate: step 3/7. Its pathway is metabolic intermediate biosynthesis; chorismate biosynthesis; chorismate from D-erythrose 4-phosphate and phosphoenolpyruvate: step 4/7. It functions in the pathway metabolic intermediate biosynthesis; chorismate biosynthesis; chorismate from D-erythrose 4-phosphate and phosphoenolpyruvate: step 5/7. It participates in metabolic intermediate biosynthesis; chorismate biosynthesis; chorismate from D-erythrose 4-phosphate and phosphoenolpyruvate: step 6/7. In terms of biological role, the AROM polypeptide catalyzes 5 consecutive enzymatic reactions in prechorismate polyaromatic amino acid biosynthesis. In Malassezia globosa (strain ATCC MYA-4612 / CBS 7966) (Dandruff-associated fungus), this protein is Pentafunctional AROM polypeptide.